A 142-amino-acid chain; its full sequence is Large ribosomal subunit protein uL13 (142 aa).

This sequence belongs to the universal ribosomal protein uL13 family. As to quaternary structure, part of the 50S ribosomal subunit.

Functionally, this protein is one of the early assembly proteins of the 50S ribosomal subunit, although it is not seen to bind rRNA by itself. It is important during the early stages of 50S assembly. This Bordetella bronchiseptica (strain ATCC BAA-588 / NCTC 13252 / RB50) (Alcaligenes bronchisepticus) protein is Large ribosomal subunit protein uL13.